The primary structure comprises 249 residues: CDP-diacylglycerol pyrophosphatase (249 aa).

A helical transmembrane segment spans residues 5–25; sequence GYFLLAVIVIVAAAGVGYWKF.

The protein belongs to the Cdh family.

It localises to the cell inner membrane. The enzyme catalyses a CDP-1,2-diacyl-sn-glycerol + H2O = a 1,2-diacyl-sn-glycero-3-phosphate + CMP + 2 H(+). It functions in the pathway phospholipid metabolism; CDP-diacylglycerol degradation; phosphatidate from CDP-diacylglycerol: step 1/1. The protein is CDP-diacylglycerol pyrophosphatase of Salmonella arizonae (strain ATCC BAA-731 / CDC346-86 / RSK2980).